Consider the following 144-residue polypeptide: Large ribosomal subunit protein uL11 (144 aa).

It belongs to the universal ribosomal protein uL11 family. Part of the ribosomal stalk of the 50S ribosomal subunit. Interacts with L10 and the large rRNA to form the base of the stalk. L10 forms an elongated spine to which L12 dimers bind in a sequential fashion forming a multimeric L10(L12)X complex. One or more lysine residues are methylated.

In terms of biological role, forms part of the ribosomal stalk which helps the ribosome interact with GTP-bound translation factors. The polypeptide is Large ribosomal subunit protein uL11 (Nocardia farcinica (strain IFM 10152)).